We begin with the raw amino-acid sequence, 149 residues long: Transcriptional repressor NrdR (149 aa).

Residues 3 to 34 (CPFCFAVDTKVIDSRLVGEGSSVRRRRQCLVC) fold into a zinc finger. In terms of domain architecture, ATP-cone spans 49-139 (PRVVKSNDVR…VYRSFEDIKE (91 aa)).

This sequence belongs to the NrdR family. Zn(2+) is required as a cofactor.

Functionally, negatively regulates transcription of bacterial ribonucleotide reductase nrd genes and operons by binding to NrdR-boxes. In Escherichia coli O139:H28 (strain E24377A / ETEC), this protein is Transcriptional repressor NrdR.